A 469-amino-acid polypeptide reads, in one-letter code: COP9 signalosome complex subunit 5 (469 aa).

The 138-residue stretch at 63-200 (TYISSLALCK…IGAFRTFPDN (138 aa)) folds into the MPN domain. Residues His-146, His-148, and Asp-159 each contribute to the Zn(2+) site. A JAMM motif motif is present at residues 146–159 (HSHPGYGCWLSGID). Disordered regions lie at residues 201–220 (YKSP…PPSK) and 331–404 (YDSF…KRPM). Residues 344–353 (DEMDDESDLD) show a composition bias toward acidic residues.

This sequence belongs to the peptidase M67A family. CSN5 subfamily. Component of the COP9 signalosome (CSN) complex.

It localises to the cytoplasm. It is found in the nucleus. Catalytic Component of the COP9 signalosome (CSN) complex that acts as an regulator of the ubiquitin (Ubl) conjugation pathway by mediating the deneddylation of the cullin subunit of SCF-type E3 ubiquitin-protein ligase complexes. The CSN complex is involved in the regulation of the mating pheromone response. This is COP9 signalosome complex subunit 5 (RRI1) from Debaryomyces hansenii (strain ATCC 36239 / CBS 767 / BCRC 21394 / JCM 1990 / NBRC 0083 / IGC 2968) (Yeast).